Here is a 266-residue protein sequence, read N- to C-terminus: Interleukin-1 beta (266 aa).

The propeptide occupies 1 to 114 (MAAVPELTSE…KTDADNFMSD (114 aa)).

The protein belongs to the IL-1 family. In terms of assembly, monomer. In its precursor form, weakly interacts with full-length MEFV; the mature cytokine does not interact at all. Interacts with integrins ITGAV:ITGBV and ITGA5:ITGB1; integrin-binding is required for IL1B signaling. Interacts with cargo receptor TMED10; the interaction is direct and is required for the secretion of IL1B mature form. Interacts with HSP90AB1; the interaction facilitates cargo translocation into the ERGIC. Interacts with HSP90B1; the interaction facilitates cargo translocation into the ERGIC.

Its subcellular location is the cytoplasm. The protein localises to the cytosol. It is found in the secreted. It localises to the lysosome. The protein resides in the extracellular exosome. Potent pro-inflammatory cytokine. Initially discovered as the major endogenous pyrogen, induces prostaglandin synthesis, neutrophil influx and activation, T-cell activation and cytokine production, B-cell activation and antibody production, and fibroblast proliferation and collagen production. Promotes Th17 differentiation of T-cells. Synergizes with IL12/interleukin-12 to induce IFNG synthesis from T-helper 1 (Th1) cells. Plays a role in angiogenesis by inducing VEGF production synergistically with TNF and IL6. Involved in transduction of inflammation downstream of pyroptosis: its mature form is specifically released in the extracellular milieu by passing through the gasdermin-D (GSDMD) pore. The polypeptide is Interleukin-1 beta (IL1B) (Canis lupus familiaris (Dog)).